Reading from the N-terminus, the 414-residue chain is COUP transcription factor 2 (414 aa).

Residues 1 to 72 (MAMVVSTWRD…PGGPGSDKQQ (72 aa)) form a disordered region. Residues 27-37 (PPVPGPPPGAP) show a composition bias toward pro residues. A compositionally biased stretch (low complexity) spans 38–57 (HTPQTPGQGGPASTPAQTAA). Thr51 is modified (phosphothreonine). A compositionally biased stretch (gly residues) spans 58–67 (GGQGGPGGPG). Positions 76 to 151 (HIECVVCGDK…VGMRREAVQR (76 aa)) form a DNA-binding region, nuclear receptor. NR C4-type zinc fingers lie at residues 79–99 (CVVCGDKSSGKHYGQFTCEGC) and 115–139 (CRANRNCPIDQHHRNQCQYCRLKKC). The tract at residues 117 to 414 (ANRNCPIDQH…SFNWPYMAIQ (298 aa)) is interaction with ZFPM2. In terms of domain architecture, NR LBD spans 177–403 (YLSGYISLLL…TLIRDMLLSG (227 aa)). Positions 337 to 414 (LQEKSQCALE…SFNWPYMAIQ (78 aa)) are important for dimerization.

It belongs to the nuclear hormone receptor family. NR2 subfamily. In terms of assembly, interacts with SQSTM1. Binds DNA as a dimer; homodimer or heterodimer with NR2F6. Interacts with NCOA1, NCOA2, NCOA3 and PPARGC1A. Interacts with ZFPM2.

It is found in the nucleus. Ligand-activated transcription factor. Activated by high concentrations of 9-cis-retinoic acid and all-trans-retinoic acid, but not by dexamethasone, cortisol or progesterone (in vitro). Regulation of the apolipoprotein A-I gene transcription. Binds to DNA site A. May be required to establish ovary identity during early gonad development. In Bos taurus (Bovine), this protein is COUP transcription factor 2 (NR2F2).